The primary structure comprises 872 residues: Alanine--tRNA ligase (872 aa).

4 residues coordinate Zn(2+): His567, His571, Cys669, and His673.

It belongs to the class-II aminoacyl-tRNA synthetase family. Requires Zn(2+) as cofactor.

It localises to the cytoplasm. The catalysed reaction is tRNA(Ala) + L-alanine + ATP = L-alanyl-tRNA(Ala) + AMP + diphosphate. Its function is as follows. Catalyzes the attachment of alanine to tRNA(Ala) in a two-step reaction: alanine is first activated by ATP to form Ala-AMP and then transferred to the acceptor end of tRNA(Ala). Also edits incorrectly charged Ser-tRNA(Ala) and Gly-tRNA(Ala) via its editing domain. This Streptococcus pneumoniae (strain Hungary19A-6) protein is Alanine--tRNA ligase.